The primary structure comprises 418 residues: Putative competence-damage inducible protein (418 aa).

The protein belongs to the CinA family.

This chain is Putative competence-damage inducible protein, found in Streptococcus pneumoniae serotype 2 (strain D39 / NCTC 7466).